The primary structure comprises 140 residues: FLYWCH family member 2 (140 aa).

2 disordered regions span residues Met-1–Phe-39 and Thr-83–Leu-140. Ser-21 carries the phosphoserine modification. Basic and acidic residues predominate over residues Pro-98 to Asp-114. Positions Ala-118 to Glu-127 are enriched in low complexity.

This is FLYWCH family member 2 (FLYWCH2) from Pongo abelii (Sumatran orangutan).